The primary structure comprises 295 residues: 4-hydroxy-tetrahydrodipicolinate synthase (295 aa).

Threonine 48 provides a ligand contact to pyruvate. Tyrosine 135 acts as the Proton donor/acceptor in catalysis. Lysine 163 functions as the Schiff-base intermediate with substrate in the catalytic mechanism. Valine 204 lines the pyruvate pocket.

The protein belongs to the DapA family. In terms of assembly, homotetramer; dimer of dimers.

Its subcellular location is the cytoplasm. It carries out the reaction L-aspartate 4-semialdehyde + pyruvate = (2S,4S)-4-hydroxy-2,3,4,5-tetrahydrodipicolinate + H2O + H(+). It participates in amino-acid biosynthesis; L-lysine biosynthesis via DAP pathway; (S)-tetrahydrodipicolinate from L-aspartate: step 3/4. Its function is as follows. Catalyzes the condensation of (S)-aspartate-beta-semialdehyde [(S)-ASA] and pyruvate to 4-hydroxy-tetrahydrodipicolinate (HTPA). The polypeptide is 4-hydroxy-tetrahydrodipicolinate synthase (Francisella tularensis subsp. novicida (strain U112)).